We begin with the raw amino-acid sequence, 142 residues long: Cystatin-8 (142 aa).

An N-terminal signal peptide occupies residues 1–19 (MAKPLWLSLILFIIPVALA). N-linked (GlcNAc...) asparagine glycosylation occurs at asparagine 39. Residues 77 to 81 (QITDR) carry the Secondary area of contact motif. Cystine bridges form between cysteine 95/cysteine 105 and cysteine 119/cysteine 139. Residue asparagine 100 is glycosylated (N-linked (GlcNAc...) asparagine).

This sequence belongs to the cystatin family. Proximal caput region of the epididymis. Lower expression in the testis. Within the testis it is localized to the elongating spermatids, whereas within the epididymis it is exclusively synthesized by the proximal caput epithelium.

The protein resides in the secreted. Its function is as follows. Performs a specialized role during sperm development and maturation. The chain is Cystatin-8 (Cst8) from Mus musculus (Mouse).